A 139-amino-acid polypeptide reads, in one-letter code: Nucleoside diphosphate kinase (139 aa).

ATP is bound by residues Lys11, Phe59, Arg87, Thr93, Arg104, and Asn114. The active-site Pros-phosphohistidine intermediate is His117.

The protein belongs to the NDK family. Homotetramer. Mg(2+) is required as a cofactor.

The protein resides in the cytoplasm. The enzyme catalyses a 2'-deoxyribonucleoside 5'-diphosphate + ATP = a 2'-deoxyribonucleoside 5'-triphosphate + ADP. It carries out the reaction a ribonucleoside 5'-diphosphate + ATP = a ribonucleoside 5'-triphosphate + ADP. Its function is as follows. Major role in the synthesis of nucleoside triphosphates other than ATP. The ATP gamma phosphate is transferred to the NDP beta phosphate via a ping-pong mechanism, using a phosphorylated active-site intermediate. The chain is Nucleoside diphosphate kinase from Flavobacterium psychrophilum (strain ATCC 49511 / DSM 21280 / CIP 103535 / JIP02/86).